Here is a 127-residue protein sequence, read N- to C-terminus: MPKSKELVSSSSSGSDSDSEVDKKLKRKKQVAPEKPVKKQKTGETSRALSSSKQSSSSRDDNMFQIGKMRYVSVRDFKGKVLIDIREYWMDPEGEMKPGRKGISLNPEQWSQLKEQISDIDDAVRKL.

Positions 1–50 (MPKSKELVSSSSSGSDSDSEVDKKLKRKKQVAPEKPVKKQKTGETSRALS) are regulatory. Residues 1–64 (MPKSKELVSS…SSSSRDDNMF (64 aa)) are disordered. Residues S4, S9, S10, S11, S13, S15, S17, and S19 each carry the phosphoserine modification. Over residues 7-16 (LVSSSSSGSD) the composition is skewed to low complexity. Residues 31-44 (VAPEKPVKKQKTGE) are compositionally biased toward basic and acidic residues. Residues K35 and K53 each carry the N6-acetyllysine modification. Residues 46–57 (SRALSSSKQSSS) are compositionally biased toward low complexity. A phosphoserine mark is found at S55, S56, S57, and S58. An N6-acetyllysine; alternate modification is found at K68. K68 participates in a covalent cross-link: Glycyl lysine isopeptide (Lys-Gly) (interchain with G-Cter in SUMO1); alternate. A Glycyl lysine isopeptide (Lys-Gly) (interchain with G-Cter in SUMO2); alternate cross-link involves residue K68. The interaction with ssDNA stretch occupies residues 77 to 101 (FKGKVLIDIREYWMDPEGEMKPGRK). Phosphoserine is present on S118.

This sequence belongs to the transcriptional coactivator PC4 family. In terms of assembly, homodimer. Interacts with CSTF2. Activity is controlled by protein kinases that target the regulatory region. Phosphorylation inactivates both ds DNA-binding and cofactor function, but does not affect binding to ssDNA.

It localises to the nucleus. General coactivator that functions cooperatively with TAFs and mediates functional interactions between upstream activators and the general transcriptional machinery. May be involved in stabilizing the multiprotein transcription complex. Binds single-stranded DNA. Also binds, in vitro, non-specifically to double-stranded DNA (ds DNA). The protein is Activated RNA polymerase II transcriptional coactivator p15 (SUB1) of Macaca fascicularis (Crab-eating macaque).